A 448-amino-acid polypeptide reads, in one-letter code: Nucleoprotein (448 aa).

The segment at 1–55 (MSFTPGKQSSSRASSGNRSGNGILKWADQSDQSRNVQTRGRRAQPKQTATSQQPS) is disordered. Positions 9–22 (SSSRASSGNRSGNG) are enriched in low complexity. Composition is skewed to polar residues over residues 29–38 (QSDQSRNVQT) and 45–55 (PKQTATSQQPS). Positions 52–194 (QQPSGGNVVP…GYYIEGSGRS (143 aa)) are RNA-binding. The CoV N NTD domain maps to 61 to 190 (PYYSWFSGIT…VLPQGYYIEG (130 aa)). Positions 106, 122, and 164 each coordinate RNA. Residues 157–231 (TPADILDRDP…RTPTSGVTPD (75 aa)) form a disordered region. The residue at position 167 (Ser167) is a Phosphoserine; by host. A Phosphothreonine; by host modification is found at Thr174. Ser191 carries the post-translational modification Phosphoserine; by host. Over residues 193-223 (RSAPNSRSTSRASSRASSAGSRSRANSGNRT) the composition is skewed to low complexity. Positions 259-384 (AKEIRQKILN…ENLNAYQQQD (126 aa)) constitute a CoV N CTD domain. The tract at residues 266–384 (ILNKPRQKRS…ENLNAYQQQD (119 aa)) is dimerization. Positions 385 to 448 (GMMNMSPKPQ…EPYTEDTSEI (64 aa)) are disordered. At Ser390 the chain carries Phosphoserine; by host. The span at 399–409 (QKNGQGENDNI) shows a compositional bias: polar residues. Residues 422 to 439 (KSRELTAEDISLLKKMDE) show a composition bias toward basic and acidic residues. The residue at position 423 (Ser423) is a Phosphoserine; by host. A Phosphothreonine; by host modification is found at Thr427.

The protein belongs to the betacoronavirus nucleocapsid protein family. As to quaternary structure, homooligomer. Both monomeric and oligomeric forms interact with RNA. Interacts with protein M. Interacts with NSP3; this interaction serves to tether the genome to the newly translated replicase-transcriptase complex at a very early stage of infection. In terms of processing, ADP-ribosylated. The ADP-ribosylation is retained in the virion during infection. Phosphorylated on serine and threonine residues.

It is found in the virion. The protein resides in the host endoplasmic reticulum-Golgi intermediate compartment. Its subcellular location is the host Golgi apparatus. Its function is as follows. Packages the positive strand viral genome RNA into a helical ribonucleocapsid (RNP) and plays a fundamental role during virion assembly through its interactions with the viral genome and membrane protein M. Plays an important role in enhancing the efficiency of subgenomic viral RNA transcription as well as viral replication. The sequence is that of Nucleoprotein from Bovine coronavirus (strain F15) (BCoV).